A 111-amino-acid polypeptide reads, in one-letter code: Cyclin-dependent protein kinase inhibitor SMR2 (111 aa).

The disordered stretch occupies residues 1 to 66 (MSKLLETLEE…PPPRKRPREI (66 aa)). A compositionally biased stretch (basic and acidic residues) spans 10–35 (EEKTVEQKPRSQEEEDHQDSSKKEEL).

Interacts with CYCD2-1. Interacts with CDKB1-1. Expressed at low levels in roots and stems. Expressed in the root vascular tissue.

Its subcellular location is the nucleus. In terms of biological role, cyclin-dependent protein kinase (CDK) inhibitor that restricts cell proliferation and cooperates with SIM and SMR1 to promote endoreplication during leaf development. This is Cyclin-dependent protein kinase inhibitor SMR2 from Arabidopsis thaliana (Mouse-ear cress).